A 202-amino-acid chain; its full sequence is ATP-dependent Clp protease proteolytic subunit (202 aa).

The active-site Nucleophile is Ser-101. The active site involves His-126.

The protein belongs to the peptidase S14 family. In terms of assembly, component of the chloroplastic Clp protease core complex.

It is found in the plastid. The protein localises to the chloroplast stroma. The enzyme catalyses Hydrolysis of proteins to small peptides in the presence of ATP and magnesium. alpha-casein is the usual test substrate. In the absence of ATP, only oligopeptides shorter than five residues are hydrolyzed (such as succinyl-Leu-Tyr-|-NHMec, and Leu-Tyr-Leu-|-Tyr-Trp, in which cleavage of the -Tyr-|-Leu- and -Tyr-|-Trp bonds also occurs).. Its function is as follows. Cleaves peptides in various proteins in a process that requires ATP hydrolysis. Has a chymotrypsin-like activity. Plays a major role in the degradation of misfolded proteins. This is ATP-dependent Clp protease proteolytic subunit from Liriodendron tulipifera (Tuliptree).